We begin with the raw amino-acid sequence, 663 residues long: DNA topoisomerase 4 subunit B (663 aa).

Residues Tyr-7, Asn-47, Asp-74, 114-120 (GLHGVGA), and Lys-341 each bind ATP. The disordered stretch occupies residues 386–418 (REAARKAREDARSGKKNKRKDTLLSGKLTPAQS). Basic and acidic residues predominate over residues 387–398 (EAARKAREDARS). A Toprim domain is found at 424–538 (NELYLVEGDS…AGRVFIALPP (115 aa)). Glu-430, Asp-503, and Asp-505 together coordinate Mg(2+).

This sequence belongs to the type II topoisomerase family. ParE type 2 subfamily. As to quaternary structure, heterotetramer composed of ParC and ParE. The cofactor is Mg(2+). Mn(2+) serves as cofactor. Ca(2+) is required as a cofactor.

The enzyme catalyses ATP-dependent breakage, passage and rejoining of double-stranded DNA.. Topoisomerase IV is essential for chromosome segregation. It relaxes supercoiled DNA. Performs the decatenation events required during the replication of a circular DNA molecule. This chain is DNA topoisomerase 4 subunit B, found in Staphylococcus aureus (strain MRSA252).